The primary structure comprises 841 residues: Rhomboid-like protease 5 (841 aa).

Positions 1-10 (MSSKGGSSRL) are enriched in low complexity. The interval 1–289 (MSSKGGSSRL…GGDGGPRRHS (289 aa)) is disordered. Positions 11–51 (GSKDLKKMTSRTERELRDSGRVRGEVERVEKRLRATAKVKE) are enriched in basic and acidic residues. Over residues 95–132 (LRPASSSPRLASSSRPTESTLPSSSSRALQGASSSSSS) the composition is skewed to low complexity. 3 stretches are compositionally biased toward basic and acidic residues: residues 154–163 (LRQEKKRLPE), 209–230 (RTAE…RGSV), and 243–275 (SSHE…RSGD). Transmembrane regions (helical) follow at residues 323-343 (FLMI…ELVL), 464-484 (MFRV…LLNV), 492-512 (WILE…VGGV), 526-546 (VTVG…PFSI), 571-590 (FGNM…GGLI), and 673-693 (FAAA…LLVP). The Nucleophile role is filled by Ser531. The active site involves His585.

The protein belongs to the peptidase S54 family.

The protein resides in the membrane. The catalysed reaction is Cleaves type-1 transmembrane domains using a catalytic dyad composed of serine and histidine that are contributed by different transmembrane domains.. In terms of biological role, serine protease involved in intramembrane proteolysis. Cleaves microneme adhesins, such as MIC2. This step is essential for efficient invasion of host cells. Catalyzes intramembrane proteolysis of AMA1. This is Rhomboid-like protease 5 (ROM5) from Toxoplasma gondii.